Here is a 437-residue protein sequence, read N- to C-terminus: Enolase superfamily member DDB_G0284701 (437 aa).

Residue Lys217 is the Proton acceptor of the active site. Mn(2+) is bound by residues Asp251, Glu279, and Asp321. Residue Asp395 is the Proton donor of the active site.

The protein belongs to the mandelate racemase/muconate lactonizing enzyme family.

This chain is Enolase superfamily member DDB_G0284701, found in Dictyostelium discoideum (Social amoeba).